The chain runs to 118 residues: Small ribosomal subunit protein uS10 (118 aa).

Residue serine 37 is modified to Phosphoserine.

This sequence belongs to the universal ribosomal protein uS10 family. Component of the small ribosomal subunit (SSU). Mature yeast ribosomes consist of a small (40S) and a large (60S) subunit. The 40S small subunit contains 1 molecule of ribosomal RNA (18S rRNA) and at least 33 different proteins. The large 60S subunit contains 3 rRNA molecules (25S, 5.8S and 5S rRNA) and at least 46 different proteins.

Its subcellular location is the cytoplasm. Its function is as follows. Component of the ribosome, a large ribonucleoprotein complex responsible for the synthesis of proteins in the cell. The small ribosomal subunit (SSU) binds messenger RNAs (mRNAs) and translates the encoded message by selecting cognate aminoacyl-transfer RNA (tRNA) molecules. The large subunit (LSU) contains the ribosomal catalytic site termed the peptidyl transferase center (PTC), which catalyzes the formation of peptide bonds, thereby polymerizing the amino acids delivered by tRNAs into a polypeptide chain. The nascent polypeptides leave the ribosome through a tunnel in the LSU and interact with protein factors that function in enzymatic processing, targeting, and the membrane insertion of nascent chains at the exit of the ribosomal tunnel. This is Small ribosomal subunit protein uS10 (rps20) from Schizosaccharomyces pombe (strain 972 / ATCC 24843) (Fission yeast).